The primary structure comprises 548 residues: Putative malate oxidoreductase [NAD] (548 aa).

Tyrosine 96 serves as the catalytic Proton donor. The active-site Proton acceptor is lysine 169. Positions 240, 241, and 264 each coordinate a divalent metal cation. NAD(+) contacts are provided by residues 297–300 (AGTA), asparagine 410, and asparagine 455.

Belongs to the malic enzymes family. Mg(2+) serves as cofactor. Requires Mn(2+) as cofactor.

It carries out the reaction (S)-malate + NAD(+) = pyruvate + CO2 + NADH. It catalyses the reaction oxaloacetate + H(+) = pyruvate + CO2. The chain is Putative malate oxidoreductase [NAD] (mez) from Mycobacterium tuberculosis (strain CDC 1551 / Oshkosh).